The following is a 457-amino-acid chain: Fibrinogen C domain-containing protein 1 (457 aa).

Residues M1–Q20 are disordered. Over M1–C33 the chain is Cytoplasmic. Residues T34–M54 form a helical; Signal-anchor for type II membrane protein membrane-spanning segment. Topologically, residues N55–N457 are extracellular. Positions R211–S235 are disordered. The Fibrinogen C-terminal domain occupies C231–R454. Residue N233 is glycosylated (N-linked (GlcNAc...) asparagine). An intrachain disulfide couples C240 to C269. An N-linked (GlcNAc...) asparagine glycan is attached at N336. Ca(2+)-binding residues include D389 and D391. C397 and C410 form a disulfide bridge.

Homotetramer; disulfide-linked.

It is found in the membrane. In terms of biological role, acetyl group-binding receptor which shows a calcium-dependent binding to acetylated structures such as chitin, some N-acetylated carbohydrates, and amino acids. The sequence is that of Fibrinogen C domain-containing protein 1 (fibcd1) from Xenopus tropicalis (Western clawed frog).